The following is a 208-amino-acid chain: Fibroblast growth factor 10 (208 aa).

The N-terminal stretch at 1–37 (MWKWILTHCASAFPHLPGCCCCCFLLLFLVSSVPVTC) is a signal peptide. Asparagine 51 and asparagine 196 each carry an N-linked (GlcNAc...) asparagine glycan.

It belongs to the heparin-binding growth factors family. As to quaternary structure, interacts with FGFR1 and FGFR2. Interacts with FGFBP1.

The protein localises to the secreted. Its function is as follows. Plays an important role in the regulation of embryonic development, cell proliferation and cell differentiation. Required for normal branching morphogenesis. May play a role in wound healing. The protein is Fibroblast growth factor 10 (FGF10) of Homo sapiens (Human).